Here is an 88-residue protein sequence, read N- to C-terminus: Small ribosomal subunit protein uS15 (88 aa).

Belongs to the universal ribosomal protein uS15 family. Part of the 30S ribosomal subunit. Forms a bridge to the 50S subunit in the 70S ribosome, contacting the 23S rRNA.

Functionally, one of the primary rRNA binding proteins, it binds directly to 16S rRNA where it helps nucleate assembly of the platform of the 30S subunit by binding and bridging several RNA helices of the 16S rRNA. Forms an intersubunit bridge (bridge B4) with the 23S rRNA of the 50S subunit in the ribosome. The chain is Small ribosomal subunit protein uS15 from Variovorax paradoxus (strain S110).